Reading from the N-terminus, the 482-residue chain is 2-succinylbenzoate--CoA ligase (482 aa).

The protein belongs to the ATP-dependent AMP-binding enzyme family. MenE subfamily.

The catalysed reaction is 2-succinylbenzoate + ATP + CoA = 2-succinylbenzoyl-CoA + AMP + diphosphate. Its pathway is quinol/quinone metabolism; 1,4-dihydroxy-2-naphthoate biosynthesis; 1,4-dihydroxy-2-naphthoate from chorismate: step 5/7. It functions in the pathway quinol/quinone metabolism; menaquinone biosynthesis. Converts 2-succinylbenzoate (OSB) to 2-succinylbenzoyl-CoA (OSB-CoA). This Bacillus anthracis (strain A0248) protein is 2-succinylbenzoate--CoA ligase.